A 148-amino-acid polypeptide reads, in one-letter code: MMDLQRTQSLLLLLVLTLLGLGLVQPSYGQDRMYQRFLRQHVDPQATGGNDNYCNVMMQRRKMTSVQCKRFNTFIHEDIWNIRGICSTTNILCKNGQMNCHEGVVKVTDCRETGNSKAPNCRYRARTSTRRVVIACEGDPEVPVHFDR.

The signal sequence occupies residues 1-29 (MMDLQRTQSLLLLLVLTLLGLGLVQPSYG). Glutamine 30 is modified (pyrrolidone carboxylic acid). 5 residues coordinate dUMP: arginine 36, histidine 41, lysine 69, asparagine 72, and threonine 73. Histidine 41 acts as the Proton acceptor in catalysis. Disulfide bonds link cysteine 54–cysteine 110, cysteine 68–cysteine 121, cysteine 86–cysteine 136, and cysteine 93–cysteine 100. Histidine 145 acts as the Proton donor in catalysis. Residue phenylalanine 146 participates in dUMP binding.

The protein belongs to the pancreatic ribonuclease family. In terms of tissue distribution, expressed in the cortical tubules of the kidney (at protein level). Also expressed in the medullary tubules of the kidney.

It is found in the secreted. Its function is as follows. Cleaves preferentially after uridine bases. Has antimicrobial activity against uropathogenic E.coli (UPEC). Probably contributes to urinary tract sterility. This chain is Ribonuclease 4 (Rnase4), found in Mus musculus (Mouse).